Here is a 637-residue protein sequence, read N- to C-terminus: Probable potassium transport system protein Kup 2 (637 aa).

12 helical membrane passes run 18-38 (FLVL…TSPL), 61-81 (LISL…VLFL), 107-127 (MPVL…DAMI), 145-165 (PAFS…LFAV), 174-194 (AVFF…GGLI), 211-231 (ALWF…AVFL), 255-275 (WFIL…ALVL), 293-313 (ALFP…QAVI), 345-365 (IYVP…IFSF), 371-391 (LATA…LMAF), 402-422 (AFTA…FLAA), and 429-449 (DGGW…WTWT).

It belongs to the HAK/KUP transporter (TC 2.A.72) family.

Its subcellular location is the cell inner membrane. It carries out the reaction K(+)(in) + H(+)(in) = K(+)(out) + H(+)(out). Functionally, transport of potassium into the cell. Likely operates as a K(+):H(+) symporter. The protein is Probable potassium transport system protein Kup 2 of Agrobacterium fabrum (strain C58 / ATCC 33970) (Agrobacterium tumefaciens (strain C58)).